The sequence spans 406 residues: tRNA-specific 2-thiouridylase MnmA (406 aa).

ATP is bound by residues 42–49 (GLSGGVDS) and L68. Residue C129 is the Nucleophile of the active site. An intrachain disulfide couples C129 to C239. G154 contributes to the ATP binding site. The tract at residues 189–191 (KDQ) is interaction with tRNA. C239 serves as the catalytic Cysteine persulfide intermediate. The interaction with tRNA stretch occupies residues 344 to 345 (RY).

Belongs to the MnmA/TRMU family.

Its subcellular location is the cytoplasm. It carries out the reaction S-sulfanyl-L-cysteinyl-[protein] + uridine(34) in tRNA + AH2 + ATP = 2-thiouridine(34) in tRNA + L-cysteinyl-[protein] + A + AMP + diphosphate + H(+). Its function is as follows. Catalyzes the 2-thiolation of uridine at the wobble position (U34) of tRNA, leading to the formation of s(2)U34. This chain is tRNA-specific 2-thiouridylase MnmA, found in Prochlorococcus marinus (strain SARG / CCMP1375 / SS120).